The following is a 360-amino-acid chain: Phospho-N-acetylmuramoyl-pentapeptide-transferase (360 aa).

Transmembrane regions (helical) follow at residues 27-47, 71-91, 94-114, 132-152, 168-188, 199-219, 236-256, 263-283, 288-308, and 338-358; these read IVSL…MIAF, TPTM…LLWV, NNPY…VGFV, WKYF…YSFG, VMPQ…VGTS, GLAI…AWAT, AGEL…FLWF, VFMG…IAVL, FLLV…ILQV, and VIVR…ATLK.

Belongs to the glycosyltransferase 4 family. MraY subfamily. Mg(2+) serves as cofactor.

The protein localises to the cell inner membrane. The enzyme catalyses UDP-N-acetyl-alpha-D-muramoyl-L-alanyl-gamma-D-glutamyl-meso-2,6-diaminopimeloyl-D-alanyl-D-alanine + di-trans,octa-cis-undecaprenyl phosphate = di-trans,octa-cis-undecaprenyl diphospho-N-acetyl-alpha-D-muramoyl-L-alanyl-D-glutamyl-meso-2,6-diaminopimeloyl-D-alanyl-D-alanine + UMP. Its pathway is cell wall biogenesis; peptidoglycan biosynthesis. Its function is as follows. Catalyzes the initial step of the lipid cycle reactions in the biosynthesis of the cell wall peptidoglycan: transfers peptidoglycan precursor phospho-MurNAc-pentapeptide from UDP-MurNAc-pentapeptide onto the lipid carrier undecaprenyl phosphate, yielding undecaprenyl-pyrophosphoryl-MurNAc-pentapeptide, known as lipid I. The protein is Phospho-N-acetylmuramoyl-pentapeptide-transferase of Photorhabdus laumondii subsp. laumondii (strain DSM 15139 / CIP 105565 / TT01) (Photorhabdus luminescens subsp. laumondii).